Consider the following 124-residue polypeptide: Large ribosomal subunit protein bL19 (124 aa).

It belongs to the bacterial ribosomal protein bL19 family.

Its function is as follows. This protein is located at the 30S-50S ribosomal subunit interface and may play a role in the structure and function of the aminoacyl-tRNA binding site. In Orientia tsutsugamushi (strain Ikeda) (Rickettsia tsutsugamushi), this protein is Large ribosomal subunit protein bL19.